Here is a 107-residue protein sequence, read N- to C-terminus: C-X-C motif chemokine 2 (107 aa).

The N-terminal stretch at 1-34 is a signal peptide; it reads MARATLSAAPSNPRLLRVALLLLLLVAASRRAAG. 2 disulfide bridges follow: C43–C69 and C45–C85.

The protein belongs to the intercrine alpha (chemokine CxC) family. In terms of processing, the N-terminal processed form GRO-beta(5-73) is produced by proteolytic cleavage after secretion from bone marrow stromal cells.

The protein resides in the secreted. Produced by activated monocytes and neutrophils and expressed at sites of inflammation. Hematoregulatory chemokine, which, in vitro, suppresses hematopoietic progenitor cell proliferation. GRO-beta(5-73) shows a highly enhanced hematopoietic activity. The chain is C-X-C motif chemokine 2 (CXCL2) from Homo sapiens (Human).